Consider the following 360-residue polypeptide: Phospho-N-acetylmuramoyl-pentapeptide-transferase (360 aa).

The next 11 helical transmembrane spans lie at 2–22 (LVWVADFLAQYFSIFSVFQYL), 26–46 (AILGVLTALLISLLVGPVMIR), 73–93 (TMGGALILVAIAVSTLLWADL), 97–117 (YVLITLGVTLLFGAIGWVDDW), 134–154 (YFWQSVFGFGAAVLLFKTAHL), 168–188 (ITLALGVGFVLLTYFVIVGGS), 199–219 (GLAIMPTVMVGGALAVFAYLS), 236–256 (TGELVIFLGALVGAGLGFLWF), 263–283 (VFMGDVGALALGAALGVVAVI), 288–308 (LVFFVMGGVFVMETVSVILQV), and 339–359 (IVRFWVITVVLVLVGLATLKI).

The protein belongs to the glycosyltransferase 4 family. MraY subfamily. The cofactor is Mg(2+).

Its subcellular location is the cell inner membrane. The enzyme catalyses UDP-N-acetyl-alpha-D-muramoyl-L-alanyl-gamma-D-glutamyl-meso-2,6-diaminopimeloyl-D-alanyl-D-alanine + di-trans,octa-cis-undecaprenyl phosphate = di-trans,octa-cis-undecaprenyl diphospho-N-acetyl-alpha-D-muramoyl-L-alanyl-D-glutamyl-meso-2,6-diaminopimeloyl-D-alanyl-D-alanine + UMP. It participates in cell wall biogenesis; peptidoglycan biosynthesis. In terms of biological role, catalyzes the initial step of the lipid cycle reactions in the biosynthesis of the cell wall peptidoglycan: transfers peptidoglycan precursor phospho-MurNAc-pentapeptide from UDP-MurNAc-pentapeptide onto the lipid carrier undecaprenyl phosphate, yielding undecaprenyl-pyrophosphoryl-MurNAc-pentapeptide, known as lipid I. The sequence is that of Phospho-N-acetylmuramoyl-pentapeptide-transferase from Hahella chejuensis (strain KCTC 2396).